We begin with the raw amino-acid sequence, 282 residues long: NADPH-dependent 7-cyano-7-deazaguanine reductase (282 aa).

Substrate is bound at residue 88 to 90 (IES). 90–91 (SK) contributes to the NADPH binding site. C190 acts as the Thioimide intermediate in catalysis. D197 functions as the Proton donor in the catalytic mechanism. 229-230 (HE) provides a ligand contact to substrate. 258–259 (RG) is a binding site for NADPH.

The protein belongs to the GTP cyclohydrolase I family. QueF type 2 subfamily. As to quaternary structure, homodimer.

It is found in the cytoplasm. The enzyme catalyses 7-aminomethyl-7-carbaguanine + 2 NADP(+) = 7-cyano-7-deazaguanine + 2 NADPH + 3 H(+). It participates in tRNA modification; tRNA-queuosine biosynthesis. Catalyzes the NADPH-dependent reduction of 7-cyano-7-deazaguanine (preQ0) to 7-aminomethyl-7-deazaguanine (preQ1). The protein is NADPH-dependent 7-cyano-7-deazaguanine reductase of Escherichia coli O9:H4 (strain HS).